Reading from the N-terminus, the 203-residue chain is Outer-membrane lipoprotein carrier protein (203 aa).

An N-terminal signal peptide occupies residues 1–21; sequence MKKIAITCALLSSLVASSVWA.

This sequence belongs to the LolA family. As to quaternary structure, monomer.

The protein localises to the periplasm. Functionally, participates in the translocation of lipoproteins from the inner membrane to the outer membrane. Only forms a complex with a lipoprotein if the residue after the N-terminal Cys is not an aspartate (The Asp acts as a targeting signal to indicate that the lipoprotein should stay in the inner membrane). The sequence is that of Outer-membrane lipoprotein carrier protein from Escherichia coli O139:H28 (strain E24377A / ETEC).